Consider the following 820-residue polypeptide: Crinkler effector protein 108 (820 aa).

Residues 1-17 (MVKLYCAVVGVAGSAFS) form the signal peptide. Positions 18–55 (VRVDESDTVDDLKDAIKAKKPNDFKDIDADKLELYVAK) are LQLFLAK domain. Residues 58–111 (GVWLTEADVKSGVADITGLVRLEVVRAKLFSVGLSDEVVSEVDAQEEAAGRGPV) are DWL domain. The HVLVXXP motif motif lies at 112–117 (NVLVVV). Residues 118–124 (PMKKRRV) carry the Host nuclear localization signal motif. Residues 125-820 (DAGVDEERRF…MHYDDDEADL (696 aa)) are C-terminal DC effector domain. N-linked (GlcNAc...) asparagine glycans are attached at residues Asn268, Asn371, and Asn703. Residues 754–791 (NINTASFHELRRLEGVGDATAAKIIAERTIRRFSNLED) are hhH DNA-binding domain.

This sequence belongs to the Crinkler effector family.

The protein resides in the secreted. It localises to the host nucleus. In terms of biological role, secreted effector that suppresses plant basal defense and promotes plant susceptibility via targeting promoters of host HSP gene and thus inhibiting their expression. CRN108 binds directly to heat shock elements (HSEs) 5'-GAAnnTTC-3' and interferes with the association of the HSE with the plant heat shock transcription factors, which initializes HSP gene expression in response to stress. This Phytophthora sojae (Soybean stem and root rot agent) protein is Crinkler effector protein 108.